An 88-amino-acid chain; its full sequence is U1-hexatoxin-Iw1d (88 aa).

The N-terminal stretch at 1–17 (LKFVVLICLVIMASTSA) is a signal peptide. Pyrrolidone carboxylic acid is present on glutamine 18. Cystine bridges form between cysteine 20–cysteine 31, cysteine 25–cysteine 39, cysteine 30–cysteine 65, cysteine 49–cysteine 73, and cysteine 67–cysteine 80. The propeptide occupies 86 to 88 (RSE).

Belongs to the MIT-like AcTx family. As to expression, expressed by the venom gland.

It is found in the secreted. The sequence is that of U1-hexatoxin-Iw1d from Illawarra wisharti (Illawarra funnel-web spider).